The chain runs to 239 residues: Tungstate uptake system permease protein TupB (239 aa).

Positions 37 to 233 (IKTTLLSSSI…LIAFCLNFIT (197 aa)) constitute an ABC transmembrane type-1 domain. A run of 5 helical transmembrane segments spans residues 45 to 65 (SISIVLALLIGFPLGFILGFF), 76 to 96 (IVDTSLSFPTVAVGLILYALI), 114 to 134 (LILGQFILALPIVIALFSNLI), 168 to 188 (ISVVALAYGRIVAEVGVAMIV), and 212 to 232 (FASGIALALVLILIAFCLNFI).

It belongs to the binding-protein-dependent transport system permease family. As to quaternary structure, the complex is composed of two ATP-binding proteins (TupC), two transmembrane proteins (TupB) and a solute-binding protein (TupA).

Its subcellular location is the cell inner membrane. Its function is as follows. Part of an ABC transporter complex involved in ultra-high affinity tungstate uptake. Probably responsible for the translocation of the substrate across the membrane. In Campylobacter jejuni subsp. jejuni serotype O:2 (strain ATCC 700819 / NCTC 11168), this protein is Tungstate uptake system permease protein TupB.